A 428-amino-acid chain; its full sequence is MLDIRLFRNEPVTVKSKIELRGDDPKVVDEILELDEQRRKLISATEEMKARRNKVSEEIALKKRNKENADDVIAEMRTLGDDIKEKDSQLNEIDNKMTGILCRIPNLISDDVPQGESDEDNVEVKKWGTPREFSFEPKAHWDIVEELKMADFDRAAKVSGARFVYLTNEGAQLERALMNYMITKHTTQHGYTEMMVPQLVNADTMYGTGQLPKFEEDLFKVEKEGLYTIPTAEVPLTNFYRNEIIQPGVLPEKFTGQSACFRSEAGSAGRDTRGLIRLHQFDKVEMVRFEQPEDSWNALEEMTTNAEAILEELGLPYRRVILCTGDIGFSASKTYDLEVWLPSYNDYKEISSCSNCTDFQARRANIRFKRDKAAKPELAHTLNGSGLAVGRTFAAIVENYQNEDGTVTIPEALVPFMGGKTQISKPVK.

231–233 (TAE) serves as a coordination point for L-serine. Position 262–264 (262–264 (RSE)) interacts with ATP. L-serine is bound at residue Glu285. 349-352 (EISS) serves as a coordination point for ATP. Position 385 (Ser385) interacts with L-serine.

This sequence belongs to the class-II aminoacyl-tRNA synthetase family. Type-1 seryl-tRNA synthetase subfamily. As to quaternary structure, homodimer. The tRNA molecule binds across the dimer.

It localises to the cytoplasm. It catalyses the reaction tRNA(Ser) + L-serine + ATP = L-seryl-tRNA(Ser) + AMP + diphosphate + H(+). The enzyme catalyses tRNA(Sec) + L-serine + ATP = L-seryl-tRNA(Sec) + AMP + diphosphate + H(+). It functions in the pathway aminoacyl-tRNA biosynthesis; selenocysteinyl-tRNA(Sec) biosynthesis; L-seryl-tRNA(Sec) from L-serine and tRNA(Sec): step 1/1. In terms of biological role, catalyzes the attachment of serine to tRNA(Ser). Is also able to aminoacylate tRNA(Sec) with serine, to form the misacylated tRNA L-seryl-tRNA(Sec), which will be further converted into selenocysteinyl-tRNA(Sec). This Staphylococcus aureus (strain MW2) protein is Serine--tRNA ligase.